The chain runs to 661 residues: MGKSEKRVATHGVRCFAKIKMFLLALTCAYVSKSLSGTYMNSMLTQIERQFGIPTSIVGLINGSFEIGNLLLIIFVSYFGTKLHRPIMIGVGCAVMGLGCFLISLPHFLMGQYEYETILPTSNVSSNSFFCVENRSQTLNPTQDPSECVKEMKSLMWIYVLVGNIIRGIGETPIMPLGISYIEDFAKSENSPLYIGILETGMTIGPLIGLLLASSCANIYVDIESVNTDDLTITPTDTRWVGAWWIGFLVCAGVNILTSFPFFFFPKTLPKEGLQENVDGTENAKEKKHRKKAKEEKRGITKDFFVFMKSLSCNPIYMLFILISVLQFNAFINSFTFMPKYLEQQYGKSTAEVVFLMGLYMLPPICLGYLIGGLIMKKFKVTVKKAAHLAFWLCLSEYLLSFLSYVMTCDNFPVAGLTTSYEGVQHQLYVENKVLADCNTRCNCSTNTWDPVCGDNGLAYMSACLAGCEKSVGTGTNMVFQNCSCIQSSGNSSAVLGLCNKGPDCANKLQYFLIIAIFGCFIYSLAGIPGYMVLLRCIKSEEKSLGVGLHAFCIRILAGIPAPIYFGALIDRTCLHWGTLKCGEPGACRMYDINSFRRLYLGLPAALRGASFVPAFFILRLTRTFQFPGDIESSKTDHAEMKLTLKESECTEVLRSKVTED.

At 1–20 (MGKSEKRVATHGVRCFAKIK) the chain is on the cytoplasmic side. A helical transmembrane segment spans residues 21 to 40 (MFLLALTCAYVSKSLSGTYM). Topologically, residues 41–59 (NSMLTQIERQFGIPTSIVG) are extracellular. The chain crosses the membrane as a helical span at residues 60 to 80 (LINGSFEIGNLLLIIFVSYFG). Over 81-86 (TKLHRP) the chain is Cytoplasmic. A helical transmembrane segment spans residues 87–111 (IMIGVGCAVMGLGCFLISLPHFLMG). The Extracellular segment spans residues 112–154 (QYEYETILPTSNVSSNSFFCVENRSQTLNPTQDPSECVKEMKS). N-linked (GlcNAc...) asparagine glycosylation is found at Asn123 and Asn134. Residues 155-183 (LMWIYVLVGNIIRGIGETPIMPLGISYIE) form a helical membrane-spanning segment. Over 184–202 (DFAKSENSPLYIGILETGM) the chain is Cytoplasmic. A helical membrane pass occupies residues 203–223 (TIGPLIGLLLASSCANIYVDI). Residues 224 to 241 (ESVNTDDLTITPTDTRWV) lie on the Extracellular side of the membrane. The helical transmembrane segment at 242–266 (GAWWIGFLVCAGVNILTSFPFFFFP) threads the bilayer. At 267–310 (KTLPKEGLQENVDGTENAKEKKHRKKAKEEKRGITKDFFVFMKS) the chain is on the cytoplasmic side. The chain crosses the membrane as a helical span at residues 311-332 (LSCNPIYMLFILISVLQFNAFI). At 333-352 (NSFTFMPKYLEQQYGKSTAE) the chain is on the extracellular side. The helical transmembrane segment at 353–376 (VVFLMGLYMLPPICLGYLIGGLIM) threads the bilayer. Topologically, residues 377 to 380 (KKFK) are cytoplasmic. Residues 381-404 (VTVKKAAHLAFWLCLSEYLLSFLS) form a helical membrane-spanning segment. The Extracellular portion of the chain corresponds to 405-512 (YVMTCDNFPV…PDCANKLQYF (108 aa)). Residues 432–487 (NKVLADCNTRCNCSTNTWDPVCGDNGLAYMSACLAGCEKSVGTGTNMVFQNCSCIQ) enclose the Kazal-like domain. 3 disulfide bridges follow: Cys438-Cys468, Cys444-Cys464, and Cys453-Cys485. N-linked (GlcNAc...) asparagine glycosylation occurs at Asn443. 2 N-linked (GlcNAc...) asparagine glycosylation sites follow: Asn482 and Asn491. Residues 513–535 (LIIAIFGCFIYSLAGIPGYMVLL) form a helical membrane-spanning segment. At 536-544 (RCIKSEEKS) the chain is on the cytoplasmic side. Residues 545–570 (LGVGLHAFCIRILAGIPAPIYFGALI) traverse the membrane as a helical segment. The Extracellular segment spans residues 571 to 604 (DRTCLHWGTLKCGEPGACRMYDINSFRRLYLGLP). The helical transmembrane segment at 605–622 (AALRGASFVPAFFILRLT) threads the bilayer. Residues 623–661 (RTFQFPGDIESSKTDHAEMKLTLKESECTEVLRSKVTED) lie on the Cytoplasmic side of the membrane. Residues Ser633 and Ser634 each carry the phosphoserine modification.

The protein belongs to the organo anion transporter (TC 2.A.60) family. As to expression, highly expressed in brain, liver, and kidney but not expressed in heart, spleen, lung, skeletal muscle, and testis.

The protein resides in the cell membrane. It carries out the reaction estrone 3-sulfate(out) = estrone 3-sulfate(in). The enzyme catalyses taurocholate(out) = taurocholate(in). It catalyses the reaction prostaglandin E2(out) = prostaglandin E2(in). The catalysed reaction is L-thyroxine(out) = L-thyroxine(in). Functionally, mediates the Na(+)-independent transport of organic anions such as taurocholate, cholate, 17-beta-glucuronosyl estradiol, prostaglandin E2, estrone 3-sulfate, L-thyroxine (T4), the cardiac glycosides ouabain and digoxin and thyroid hormones. May play an especially important role in the brain accumulation and toxicity of digoxin and in the hepatobiliary and renal excretion of cardiac glycosides. Shows a pH-sensitive substrate specificity which may be ascribed to the protonation state of the binding site and leads to a stimulation of substrate transport in an acidic microenvironment. Hydrogencarbonate/HCO3(-) acts as the probable counteranion that exchanges for organic anions. This is Solute carrier organic anion transporter family member 1A4 (Slco1a4) from Rattus norvegicus (Rat).